Reading from the N-terminus, the 309-residue chain is Porphobilinogen deaminase (309 aa).

An S-(dipyrrolylmethanemethyl)cysteine modification is found at Cys-240.

This sequence belongs to the HMBS family. In terms of assembly, monomer. The cofactor is dipyrromethane.

It carries out the reaction 4 porphobilinogen + H2O = hydroxymethylbilane + 4 NH4(+). Its pathway is porphyrin-containing compound metabolism; protoporphyrin-IX biosynthesis; coproporphyrinogen-III from 5-aminolevulinate: step 2/4. In terms of biological role, tetrapolymerization of the monopyrrole PBG into the hydroxymethylbilane pre-uroporphyrinogen in several discrete steps. This is Porphobilinogen deaminase from Brevibacillus brevis (strain 47 / JCM 6285 / NBRC 100599).